The chain runs to 629 residues: tRNA uridine 5-carboxymethylaminomethyl modification enzyme MnmG (629 aa).

13-18 (GGGHAG) contacts FAD. 273–287 (GPRYCPSIEDKVNRF) contributes to the NAD(+) binding site.

It belongs to the MnmG family. As to quaternary structure, homodimer. Heterotetramer of two MnmE and two MnmG subunits. FAD serves as cofactor.

Its subcellular location is the cytoplasm. Functionally, NAD-binding protein involved in the addition of a carboxymethylaminomethyl (cmnm) group at the wobble position (U34) of certain tRNAs, forming tRNA-cmnm(5)s(2)U34. The polypeptide is tRNA uridine 5-carboxymethylaminomethyl modification enzyme MnmG (Hahella chejuensis (strain KCTC 2396)).